We begin with the raw amino-acid sequence, 655 residues long: Probable alpha-galactosidase D (655 aa).

Residues 1–16 (MASVIALSLLLPAAFA) form the signal peptide. 2 N-linked (GlcNAc...) asparagine glycosylation sites follow: asparagine 87 and asparagine 93. Cysteine 126 and cysteine 153 are oxidised to a cystine. The active-site Nucleophile is the aspartate 151. 196–200 (EWGID) is a binding site for substrate. The active-site Proton donor is the aspartate 218. N-linked (GlcNAc...) asparagine glycans are attached at residues asparagine 432, asparagine 482, asparagine 502, asparagine 540, and asparagine 579.

The protein belongs to the glycosyl hydrolase 27 family.

It is found in the secreted. The catalysed reaction is Hydrolysis of terminal, non-reducing alpha-D-galactose residues in alpha-D-galactosides, including galactose oligosaccharides, galactomannans and galactolipids.. Its function is as follows. Hydrolyzes a variety of simple alpha-D-galactoside as well as more complex molecules such as oligosaccharides and polysaccharides. This is Probable alpha-galactosidase D (aglD) from Aspergillus terreus (strain NIH 2624 / FGSC A1156).